The chain runs to 339 residues: Phytoene synthase (339 aa).

This sequence belongs to the phytoene/squalene synthase family. The cofactor is ATP. Mn(2+) is required as a cofactor. Mg(2+) serves as cofactor.

It functions in the pathway carotenoid biosynthesis; phytoene biosynthesis. Its function is as follows. Involved in the biosynthesis of carotenoids. Catalyzes the condensation of two molecules of geranylgeranyl diphosphate (GGPP) to give prephytoene diphosphate (PPPP) and the subsequent rearrangement of the cyclopropylcarbinyl intermediate to yield phytoene. This is Phytoene synthase (crtB) from Rhodobacter capsulatus (strain ATCC BAA-309 / NBRC 16581 / SB1003).